Here is a 380-residue protein sequence, read N- to C-terminus: Septin homolog spn4 (380 aa).

The Septin-type G domain maps to 25-298; it reads NGVAFTLMLC…EQYRQEQMKV (274 aa). Residues 35–42 are G1 motif; that stretch reads GESGLGKT. GTP-binding positions include 35-42, T70, G96, 175-183, G231, and R247; these read GESGLGKT and KADMYTRRD. The G3 motif stretch occupies residues 93–96; that stretch reads DTPG. The segment at 174–177 is G4 motif; that stretch reads AKAD.

Belongs to the TRAFAC class TrmE-Era-EngA-EngB-Septin-like GTPase superfamily. Septin GTPase family. In terms of assembly, component of the septin complex composed of two copies of each spn1, spn2, spn3 and spn4.

It is found in the cytoplasm. It localises to the cell cortex. Functionally, plays a role in the cell cycle. Involved in a late stage of septum formation leading to the separation of the daughter cells. This is Septin homolog spn4 (spn4) from Schizosaccharomyces pombe (strain 972 / ATCC 24843) (Fission yeast).